The chain runs to 366 residues: 2-aminoethylphosphonate--pyruvate transaminase (366 aa).

K194 is subject to N6-(pyridoxal phosphate)lysine.

This sequence belongs to the class-V pyridoxal-phosphate-dependent aminotransferase family. PhnW subfamily. In terms of assembly, homodimer. Pyridoxal 5'-phosphate is required as a cofactor.

It catalyses the reaction (2-aminoethyl)phosphonate + pyruvate = phosphonoacetaldehyde + L-alanine. Functionally, involved in phosphonate degradation. The sequence is that of 2-aminoethylphosphonate--pyruvate transaminase from Lactiplantibacillus plantarum (strain ATCC BAA-793 / NCIMB 8826 / WCFS1) (Lactobacillus plantarum).